A 162-amino-acid chain; its full sequence is MPDLYAIIRIRGRLDVPPDVDYTLKLLRLHKKFHMVIYPSNQPGLKGMLQKAKDWITWGEINYETLVELLRKRGRTLGNKPLTDEFVDKYLSKYGIYGGIQGLAKALLEGKIKLHKLEVIKPVFRLHPPRGGFKRSTKRPFNDGGELGYRGKSINELIKRML.

The protein belongs to the universal ribosomal protein uL30 family. As to quaternary structure, part of the 50S ribosomal subunit.

This Staphylothermus marinus (strain ATCC 43588 / DSM 3639 / JCM 9404 / F1) protein is Large ribosomal subunit protein uL30.